Reading from the N-terminus, the 431-residue chain is Na(+)-translocating NADH-quinone reductase subunit F (431 aa).

The helical transmembrane segment at 10–30 (IFVASAAFCSLGLILVAVILL) threads the bilayer. One can recognise a 2Fe-2S ferredoxin-type domain in the interval 41–133 (CKLKINNDDS…DLCLEVEERY (93 aa)). [2Fe-2S] cluster contacts are provided by Cys-76, Cys-82, Cys-85, and Cys-117. Residues 136-286 (ASSWEGTVVS…SGPYGESFMK (151 aa)) form the FAD-binding FR-type domain. The tract at residues 289–413 (NRPVIFLIGG…ALHNSSILTL (125 aa)) is catalytic.

The protein belongs to the NqrF family. In terms of assembly, composed of six subunits; NqrA, NqrB, NqrC, NqrD, NqrE and NqrF. The cofactor is [2Fe-2S] cluster. It depends on FAD as a cofactor.

The protein resides in the cell inner membrane. The enzyme catalyses a ubiquinone + n Na(+)(in) + NADH + H(+) = a ubiquinol + n Na(+)(out) + NAD(+). In terms of biological role, NQR complex catalyzes the reduction of ubiquinone-1 to ubiquinol by two successive reactions, coupled with the transport of Na(+) ions from the cytoplasm to the periplasm. The first step is catalyzed by NqrF, which accepts electrons from NADH and reduces ubiquinone-1 to ubisemiquinone by a one-electron transfer pathway. This Chlamydia trachomatis serovar D (strain ATCC VR-885 / DSM 19411 / UW-3/Cx) protein is Na(+)-translocating NADH-quinone reductase subunit F.